A 409-amino-acid polypeptide reads, in one-letter code: Na(+)/H(+) antiporter NhaA (409 aa).

Transmembrane regions (helical) follow at residues serine 13–leucine 33, leucine 58–leucine 78, isoleucine 93–leucine 113, phenylalanine 120–leucine 140, isoleucine 153–phenylalanine 173, serine 176–leucine 196, valine 216–isoleucine 236, leucine 256–serine 276, glycine 279–valine 299, phenylalanine 326–isoleucine 346, and leucine 363–serine 383.

The protein belongs to the NhaA Na(+)/H(+) (TC 2.A.33) antiporter family.

It localises to the cell inner membrane. It carries out the reaction Na(+)(in) + 2 H(+)(out) = Na(+)(out) + 2 H(+)(in). Its function is as follows. Na(+)/H(+) antiporter that extrudes sodium in exchange for external protons. The protein is Na(+)/H(+) antiporter NhaA of Campylobacter concisus (strain 13826).